The chain runs to 218 residues: Probable 2-aminoethanethiol dioxygenase (218 aa).

Requires Fe cation as cofactor.

The enzyme catalyses cysteamine + O2 = hypotaurine + H(+). The chain is Probable 2-aminoethanethiol dioxygenase (ado-1) from Dictyostelium discoideum (Social amoeba).